A 1032-amino-acid polypeptide reads, in one-letter code: ATPase MORC2 (1032 aa).

Residue alanine 2 is modified to N-acetylalanine. ATP contacts are provided by residues asparagine 39, 87–89, and 99–105; these read SAK and QYGNGLK. Residue asparagine 39 coordinates Mg(2+). Positions 282–362 form a coiled coil; it reads SRFKTRAEQE…KEAKQRALKE (81 aa). ATP is bound at residue lysine 427. The CW-type zinc-finger motif lies at 490-544; sequence AMEIPTTIQCDLCLKWRTLPFQLSSVEKDYPDTWVCSMNPDPEQDRCEASEQKQK. The Zn(2+) site is built by cysteine 499, cysteine 502, cysteine 525, and cysteine 536. Disordered stretches follow at residues 530 to 563 and 577 to 793; these read DPEQ…KQKQ and ALQK…RAQK. 2 stretches are compositionally biased toward basic and acidic residues: residues 532-543 and 550-563; these read EQDRCEASEQKQ and FRKD…KQKQ. Residues 547 to 584 are a coiled coil; that stretch reads LGTFRKDMKTQEEKQKQLTEKIRQQQEKLEALQKTTPI. Threonine 582 bears the Phosphothreonine mark. Serine 602 and serine 615 each carry phosphoserine. Residues 627 to 638 show a composition bias toward pro residues; the sequence is SRPPSLPTPRPA. Residue lysine 652 forms a Glycyl lysine isopeptide (Lys-Gly) (interchain with G-Cter in SUMO2) linkage. Positions 690-704 are enriched in low complexity; it reads PLVQQLSPSLLPNSK. Phosphoserine is present on serine 696. A Glycyl lysine isopeptide (Lys-Gly) (interchain with G-Cter in SUMO2) cross-link involves residue lysine 704. Serine 705 is modified (phosphoserine). Over residues 711–720 the composition is skewed to low complexity; the sequence is SPKVIKTPVV. Residue lysine 716 forms a Glycyl lysine isopeptide (Lys-Gly) (interchain with G-Cter in SUMO2) linkage. Residues serine 725 and serine 730 each carry the phosphoserine modification. Threonine 733 is subject to Phosphothreonine. A Phosphoserine; by PAK1 modification is found at serine 739. Positions 741–761 form a coiled coil; it reads AVSDEEEVEEEAERRKERCKR. Residue serine 743 is modified to Phosphoserine. Basic and acidic residues predominate over residues 765 to 774; it reads VVKEEKKDSN. Residue lysine 767 forms a Glycyl lysine isopeptide (Lys-Gly) (interchain with G-Cter in SUMO2) linkage. Serine 777 and serine 779 each carry phosphoserine. Lysine 819 is covalently cross-linked (Glycyl lysine isopeptide (Lys-Gly) (interchain with G-Cter in SUMO2)). The tract at residues 850 to 870 is disordered; the sequence is RLMKPPSPEHQSLDTQQEGGE. Lysine 932 participates in a covalent cross-link: Glycyl lysine isopeptide (Lys-Gly) (interchain with G-Cter in SUMO2). Residues 966–1016 adopt a coiled-coil conformation; sequence QSRADSRAKASEESLRTSERKLRETEEKLQKLRTNIVALLQKVQEDIDINT.

As to quaternary structure, homodimerizes upon ATP-binding and dissociate upon ATP hydrolysis; homodimerization is required for gene silencing. Interacts with HDAC4. Interacts with ACLY. Interacts with TASOR and MPHOSPH8; the interactions associate MORC2 with the HUSH complex which recruits MORC2 to heterochromatic loci. In terms of processing, phosphorylated by PAK1 at Ser-739 upon DNA damage. Phosphorylation is required for ATPase activity and recruitment to damaged chromatin. In terms of tissue distribution, highly expressed in smooth muscle, pancreas and testis.

The protein resides in the nucleus. It is found in the cytoplasm. Its subcellular location is the cytosol. It localises to the chromosome. The protein localises to the nucleus matrix. It catalyses the reaction ATP + H2O = ADP + phosphate + H(+). Its activity is regulated as follows. ATPase activity is dependent of phosphorylation by PAK1 and presence of DNA. Essential for epigenetic silencing by the HUSH (human silencing hub) complex. Recruited by HUSH to target site in heterochromatin, the ATPase activity and homodimerization are critical for HUSH-mediated silencing. Represses germ cell-related genes and L1 retrotransposons in collaboration with SETDB1 and the HUSH complex, the silencing is dependent of repressive epigenetic modifications, such as H3K9me3 mark. Silencing events often occur within introns of transcriptionally active genes, and lead to the down-regulation of host gene expression. During DNA damage response, regulates chromatin remodeling through ATP hydrolysis. Upon DNA damage, is phosphorylated by PAK1, both colocalize to chromatin and induce H2AX expression. ATPase activity is required and dependent of phosphorylation by PAK1 and presence of DNA. Recruits histone deacetylases, such as HDAC4, to promoter regions, causing local histone H3 deacetylation and transcriptional repression of genes such as CA9. Exhibits a cytosolic function in lipogenesis, adipogenic differentiation, and lipid homeostasis by increasing the activity of ACLY, possibly preventing its dephosphorylation. This chain is ATPase MORC2, found in Homo sapiens (Human).